The primary structure comprises 411 residues: LL-diaminopimelate aminotransferase (411 aa).

Positions 15 and 42 each coordinate substrate. Residues tyrosine 72, 105–106, tyrosine 129, asparagine 186, tyrosine 217, and 245–247 each bind pyridoxal 5'-phosphate; these read SK and SFS. The substrate site is built by lysine 106, tyrosine 129, and asparagine 186. Lysine 248 is subject to N6-(pyridoxal phosphate)lysine. 2 residues coordinate pyridoxal 5'-phosphate: arginine 256 and asparagine 287. Substrate contacts are provided by asparagine 287 and arginine 382.

Belongs to the class-I pyridoxal-phosphate-dependent aminotransferase family. LL-diaminopimelate aminotransferase subfamily. As to quaternary structure, homodimer. Requires pyridoxal 5'-phosphate as cofactor.

The catalysed reaction is (2S,6S)-2,6-diaminopimelate + 2-oxoglutarate = (S)-2,3,4,5-tetrahydrodipicolinate + L-glutamate + H2O + H(+). It functions in the pathway amino-acid biosynthesis; L-lysine biosynthesis via DAP pathway; LL-2,6-diaminopimelate from (S)-tetrahydrodipicolinate (aminotransferase route): step 1/1. Its function is as follows. Involved in the synthesis of meso-diaminopimelate (m-DAP or DL-DAP), required for both lysine and peptidoglycan biosynthesis. Catalyzes the direct conversion of tetrahydrodipicolinate to LL-diaminopimelate. Is also able to use meso-diaminopimelate, lysine or ornithine as substrates. This Protochlamydia amoebophila (strain UWE25) protein is LL-diaminopimelate aminotransferase.